The sequence spans 977 residues: Disks large-associated protein 1 (977 aa).

Disordered stretches follow at residues 150–203 (TKSH…GWWS) and 349–371 (KAMG…KVAA). Phosphoserine occurs at positions 169, 356, 359, 362, 366, 383, 412, 415, 419, 422, 431, 503, 510, and 562. The residue at position 563 (T563) is a Phosphothreonine. A phosphoserine mark is found at S565 and S589. T590 is modified (phosphothreonine). 2 positions are modified to phosphoserine: S592 and S595. Interaction with DYL2 stretches follow at residues 650–661 (LSIGIQVDDAEE) and 672–683 (SKFQSVGVQVEE). The tract at residues 899 to 965 (WKQMDPLDKK…QNSATESAES (67 aa)) is disordered. Composition is skewed to basic and acidic residues over residues 903-912 (DPLDKKERRA) and 928-943 (IRER…EARK). S932 carries the phosphoserine modification. Positions 954–963 (VRQNSATESA) are enriched in polar residues. Residues 975-977 (TRL) carry the PDZ-binding motif.

This sequence belongs to the SAPAP family. Interacts with guanylate kinase-like domain of DLG1, DLG2, DLG3, DLG4 and AIP1. Interacts with the PDZ domain of SHANK1, SHANK2 and SHANK3. Found in a complex with DLG4 and SHANK1, SHANK2 or SHANK3. Found in a complex with DLG4 and BEGAIN. Interacts with DYL2 and LRFN1. Interacts with MPP2 (via the SH3-Guanylate kinase-like sub-module). Post-translationally, ubiquitinated by TRIM3; leading to proteasomal degradation. As to expression, expressed in brain.

Its subcellular location is the cell membrane. It is found in the postsynaptic density. The protein resides in the synapse. Its function is as follows. Part of the postsynaptic scaffold in neuronal cells. The sequence is that of Disks large-associated protein 1 (DLGAP1) from Homo sapiens (Human).